The chain runs to 70 residues: DNA-directed RNA polymerase subunit omega (70 aa).

It belongs to the RNA polymerase subunit omega family. The RNAP catalytic core consists of 2 alpha, 1 beta, 1 beta' and 1 omega subunit. When a sigma factor is associated with the core the holoenzyme is formed, which can initiate transcription.

The catalysed reaction is RNA(n) + a ribonucleoside 5'-triphosphate = RNA(n+1) + diphosphate. In terms of biological role, promotes RNA polymerase assembly. Latches the N- and C-terminal regions of the beta' subunit thereby facilitating its interaction with the beta and alpha subunits. This chain is DNA-directed RNA polymerase subunit omega, found in Bacillus cereus (strain G9842).